A 405-amino-acid chain; its full sequence is Argininosuccinate synthase (405 aa).

Position 9–17 (9–17 (AYSGGLDTS)) interacts with ATP. Residues Y87 and S92 each contribute to the L-citrulline site. An ATP-binding site is contributed by G117. The L-aspartate site is built by T119, N123, and D124. N123 is a binding site for L-citrulline. Residues R127, S176, S185, E262, and Y274 each contribute to the L-citrulline site.

Belongs to the argininosuccinate synthase family. Type 1 subfamily. As to quaternary structure, homotetramer.

It localises to the cytoplasm. It carries out the reaction L-citrulline + L-aspartate + ATP = 2-(N(omega)-L-arginino)succinate + AMP + diphosphate + H(+). Its pathway is amino-acid biosynthesis; L-arginine biosynthesis; L-arginine from L-ornithine and carbamoyl phosphate: step 2/3. This is Argininosuccinate synthase from Caldicellulosiruptor saccharolyticus (strain ATCC 43494 / DSM 8903 / Tp8T 6331).